Here is a 323-residue protein sequence, read N- to C-terminus: MKTTFLDFEQPIAELEAKIEELRFVQDDSAVDISEEIERLSKKSQQLTKDLYANLTPWQVSQIARHPQRPYTLDYVSELFTDFHELHGDRAFADDQSIVGGLARFNGHACMVIGHQKGRDTKERAARNFGMPRPEGYRKAERLMRVAEKFGLPIFTFVDTPGAYPGVGAEERGQSEAIGHNLYVMAELKTPIIATVIGEGGSGGALAIAVADTVMMLQFSTYSVISPEGCASILWKSAAKAPEAAEALGLTAHRLKALGLIDKIVNEPLGGAHRDPKGMAALLRRALGDSLRQFQGMSVDALRERRFERLMAYGKFKETTPRA.

Positions 39–293 (RLSKKSQQLT…RRALGDSLRQ (255 aa)) constitute a CoA carboxyltransferase C-terminal domain.

It belongs to the AccA family. Acetyl-CoA carboxylase is a heterohexamer composed of biotin carboxyl carrier protein (AccB), biotin carboxylase (AccC) and two subunits each of ACCase subunit alpha (AccA) and ACCase subunit beta (AccD).

It localises to the cytoplasm. The enzyme catalyses N(6)-carboxybiotinyl-L-lysyl-[protein] + acetyl-CoA = N(6)-biotinyl-L-lysyl-[protein] + malonyl-CoA. It functions in the pathway lipid metabolism; malonyl-CoA biosynthesis; malonyl-CoA from acetyl-CoA: step 1/1. Component of the acetyl coenzyme A carboxylase (ACC) complex. First, biotin carboxylase catalyzes the carboxylation of biotin on its carrier protein (BCCP) and then the CO(2) group is transferred by the carboxyltransferase to acetyl-CoA to form malonyl-CoA. The sequence is that of Acetyl-coenzyme A carboxylase carboxyl transferase subunit alpha from Burkholderia pseudomallei (strain 1106a).